The primary structure comprises 241 residues: DnaJ homolog subfamily B member 6 (241 aa).

The tract at residues 2 to 146 (VDYYEVLGVQ…TGSFFSAFSG (145 aa)) is interaction with HSP70. In terms of domain architecture, J spans 3-69 (DYYEVLGVQR…KKRDIYDKYG (67 aa)). The interval 119 to 241 (FEDFFGNRRG…KEQLLRLDNK (123 aa)) is interaction with KRT18. Arg-135 carries the omega-N-methylarginine modification.

As to quaternary structure, homooligomer. Interacts with BAG3, HSPB8 and STUB1. Interacts with ALKBH1. Interacts with HSP70, KRT18 and PTTG.

The protein resides in the cytoplasm. It localises to the perinuclear region. It is found in the nucleus. Its subcellular location is the myofibril. The protein localises to the sarcomere. The protein resides in the z line. Functionally, has a stimulatory effect on the ATPase activity of HSP70 in a dose-dependent and time-dependent manner and hence acts as a co-chaperone of HSP70. Plays an indispensable role in the organization of KRT8/KRT18 filaments. Acts as an endogenous molecular chaperone for neuronal proteins including huntingtin. Suppresses aggregation and toxicity of polyglutamine-containing, aggregation-prone proteins. Also reduces cellular toxicity and caspase-3 activity. The protein is DnaJ homolog subfamily B member 6 of Macaca fascicularis (Crab-eating macaque).